A 209-amino-acid polypeptide reads, in one-letter code: Guanylate kinase (209 aa).

Residues 9–188 (GIMLVISSPS…SVYQIKCIFT (180 aa)) enclose the Guanylate kinase-like domain. 16-23 (SPSGGGKT) serves as a coordination point for ATP.

This sequence belongs to the guanylate kinase family.

It is found in the cytoplasm. The catalysed reaction is GMP + ATP = GDP + ADP. Functionally, essential for recycling GMP and indirectly, cGMP. This is Guanylate kinase from Ehrlichia chaffeensis (strain ATCC CRL-10679 / Arkansas).